A 351-amino-acid chain; its full sequence is S-adenosylmethionine:tRNA ribosyltransferase-isomerase (351 aa).

It belongs to the QueA family. In terms of assembly, monomer.

The protein resides in the cytoplasm. It carries out the reaction 7-aminomethyl-7-carbaguanosine(34) in tRNA + S-adenosyl-L-methionine = epoxyqueuosine(34) in tRNA + adenine + L-methionine + 2 H(+). The protein operates within tRNA modification; tRNA-queuosine biosynthesis. Functionally, transfers and isomerizes the ribose moiety from AdoMet to the 7-aminomethyl group of 7-deazaguanine (preQ1-tRNA) to give epoxyqueuosine (oQ-tRNA). In Sphingopyxis alaskensis (strain DSM 13593 / LMG 18877 / RB2256) (Sphingomonas alaskensis), this protein is S-adenosylmethionine:tRNA ribosyltransferase-isomerase.